The primary structure comprises 590 residues: DEAD-box ATP-dependent RNA helicase 27 (590 aa).

Residues 1–92 are disordered; the sequence is MAPAPATTSS…EKGNEGGSGI (92 aa). Positions 27 to 62 are enriched in acidic residues; that stretch reads SDSESEELSYDTAAADEEEGEEEAPNQMEELEEEQE. Residues 40 to 87 adopt a coiled-coil conformation; that stretch reads AADEEEGEEEAPNQMEELEEEQEEEKKEKKQKKEMSKEKKRKKEKGNE. The segment covering 63–76 has biased composition (basic and acidic residues); sequence EEKKEKKQKKEMSK. The short motif at 96–124 is the Q motif element; it reads MLFSELGVSEPTARAIREMNYTYLTQIQA. The Helicase ATP-binding domain occupies 127 to 302; sequence IPHLLNGKDV…KLSFEKNEES (176 aa). An ATP-binding site is contributed by 140-147; that stretch reads AKTGSGKT. The DEAD box signature appears at 250-253; the sequence is DEAD. Residues 335–488 form the Helicase C-terminal domain; that stretch reads RFLVLYAFLK…NKVPNLQSHL (154 aa). Positions 551 to 590 are disordered; sequence SASKHRRKMRKVDGGRRHGISAANPYGRKGGDDKRQFARF. Residues 579–590 are compositionally biased toward basic and acidic residues; the sequence is KGGDDKRQFARF.

The protein belongs to the DEAD box helicase family. DDX18/HAS1 subfamily.

The catalysed reaction is ATP + H2O = ADP + phosphate + H(+). This is DEAD-box ATP-dependent RNA helicase 27 from Oryza sativa subsp. japonica (Rice).